Reading from the N-terminus, the 382-residue chain is Glutamyl-tRNA reductase (382 aa).

Residues 38–41 (TCNR), serine 85, 90–92 (ENQ), and glutamine 96 contribute to the substrate site. The active-site Nucleophile is the cysteine 39. 164-169 (GAGEIG) contributes to the NADP(+) binding site.

This sequence belongs to the glutamyl-tRNA reductase family. As to quaternary structure, homodimer.

It carries out the reaction (S)-4-amino-5-oxopentanoate + tRNA(Glu) + NADP(+) = L-glutamyl-tRNA(Glu) + NADPH + H(+). It participates in porphyrin-containing compound metabolism; protoporphyrin-IX biosynthesis; 5-aminolevulinate from L-glutamyl-tRNA(Glu): step 1/2. In terms of biological role, catalyzes the NADPH-dependent reduction of glutamyl-tRNA(Glu) to glutamate 1-semialdehyde (GSA). This is Glutamyl-tRNA reductase from Methanococcus maripaludis (strain C7 / ATCC BAA-1331).